A 504-amino-acid polypeptide reads, in one-letter code: Deoxyguanosinetriphosphate triphosphohydrolase (504 aa).

Residues 66 to 273 enclose the HD domain; it reads RLTHSMEVQQ…MEAADDISYC (208 aa).

The protein belongs to the dGTPase family. Type 1 subfamily. As to quaternary structure, homotetramer. It depends on Mg(2+) as a cofactor.

The enzyme catalyses dGTP + H2O = 2'-deoxyguanosine + triphosphate + H(+). DGTPase preferentially hydrolyzes dGTP over the other canonical NTPs. The polypeptide is Deoxyguanosinetriphosphate triphosphohydrolase (Enterobacter sp. (strain 638)).